A 23-amino-acid chain; its full sequence is 48 kDa cell wall protein (23 aa).

It localises to the secreted. The protein localises to the cell wall. The chain is 48 kDa cell wall protein from Nicotiana tabacum (Common tobacco).